The following is a 1071-amino-acid chain: DNA-directed RNA polymerase subunit beta (1071 aa).

This sequence belongs to the RNA polymerase beta chain family. In plastids the minimal PEP RNA polymerase catalytic core is composed of four subunits: alpha, beta, beta', and beta''. When a (nuclear-encoded) sigma factor is associated with the core the holoenzyme is formed, which can initiate transcription.

Its subcellular location is the plastid. The protein localises to the chloroplast. It catalyses the reaction RNA(n) + a ribonucleoside 5'-triphosphate = RNA(n+1) + diphosphate. Its function is as follows. DNA-dependent RNA polymerase catalyzes the transcription of DNA into RNA using the four ribonucleoside triphosphates as substrates. In Nymphaea alba (White water-lily), this protein is DNA-directed RNA polymerase subunit beta.